A 201-amino-acid polypeptide reads, in one-letter code: Small ribosomal subunit protein uS4 (201 aa).

An S4 RNA-binding domain is found at 92–155 (RRLDAVVYAL…QKLDIIQESV (64 aa)).

It belongs to the universal ribosomal protein uS4 family. In terms of assembly, part of the 30S ribosomal subunit. Contacts protein S5. The interaction surface between S4 and S5 is involved in control of translational fidelity.

Functionally, one of the primary rRNA binding proteins, it binds directly to 16S rRNA where it nucleates assembly of the body of the 30S subunit. In terms of biological role, with S5 and S12 plays an important role in translational accuracy. The protein is Small ribosomal subunit protein uS4 of Staphylococcus carnosus (strain TM300).